Reading from the N-terminus, the 93-residue chain is Cobalt transport protein CbiN (93 aa).

The next 2 membrane-spanning stretches (helical) occupy residues 5–25 (LILLAMVAALMILPFFINHGG) and 63–83 (LLFTLQGSLGAAVIFYILGYA).

The protein belongs to the CbiN family. As to quaternary structure, forms an energy-coupling factor (ECF) transporter complex composed of an ATP-binding protein (A component, CbiO), a transmembrane protein (T component, CbiQ) and 2 possible substrate-capture proteins (S components, CbiM and CbiN) of unknown stoichimetry.

It is found in the cell inner membrane. It functions in the pathway cofactor biosynthesis; adenosylcobalamin biosynthesis. Part of the energy-coupling factor (ECF) transporter complex CbiMNOQ involved in cobalt import. This Klebsiella pneumoniae subsp. pneumoniae (strain ATCC 700721 / MGH 78578) protein is Cobalt transport protein CbiN.